The following is a 527-amino-acid chain: 2-isopropylmalate synthase (527 aa).

Residues 18–280 (IRIFDTTLRD…QTNINSKRLV (263 aa)) enclose the Pyruvate carboxyltransferase domain. Residues D27, H215, H217, and N251 each coordinate Mn(2+). The regulatory domain stretch occupies residues 405–527 (TLVDYEVTSG…ASDPGELPQP (123 aa)).

This sequence belongs to the alpha-IPM synthase/homocitrate synthase family. LeuA type 1 subfamily. Homodimer. It depends on Mn(2+) as a cofactor.

It localises to the cytoplasm. It catalyses the reaction 3-methyl-2-oxobutanoate + acetyl-CoA + H2O = (2S)-2-isopropylmalate + CoA + H(+). The protein operates within amino-acid biosynthesis; L-leucine biosynthesis; L-leucine from 3-methyl-2-oxobutanoate: step 1/4. Functionally, catalyzes the condensation of the acetyl group of acetyl-CoA with 3-methyl-2-oxobutanoate (2-ketoisovalerate) to form 3-carboxy-3-hydroxy-4-methylpentanoate (2-isopropylmalate). The sequence is that of 2-isopropylmalate synthase from Rhodopirellula baltica (strain DSM 10527 / NCIMB 13988 / SH1).